A 404-amino-acid chain; its full sequence is Glucosyl-3-phosphoglycerate synthase (404 aa).

Residue D146 participates in a divalent metal cation binding. 188 to 190 (GRV) serves as a coordination point for (2R)-3-phosphoglycerate. A divalent metal cation is bound at residue H270.

Belongs to the glycosyltransferase 2 family. Mn(2+) is required as a cofactor. It depends on Co(2+) as a cofactor. The cofactor is Mg(2+).

The catalysed reaction is an NDP-alpha-D-glucose + (2R)-3-phosphoglycerate = (2R)-2-O-(alpha-D-glucopyranosyl)-3-phospho-glycerate + a ribonucleoside 5'-diphosphate + H(+). In terms of biological role, involved in the biosynthesis of 6-O-methylglucose lipopolysaccarides (MGLPs). Catalyzes the transfer of a glucose (Glc) moiety from uridine diphosphate (UDP-Glc) to the position 2 of 3-phospho-D-glycerate (3-PGA) to form glucosyl-3-phosphoglycerate (GPG). This chain is Glucosyl-3-phosphoglycerate synthase, found in Methanococcoides burtonii (strain DSM 6242 / NBRC 107633 / OCM 468 / ACE-M).